Reading from the N-terminus, the 341-residue chain is UDP-3-O-acylglucosamine N-acyltransferase (341 aa).

His-242 (proton acceptor) is an active-site residue.

This sequence belongs to the transferase hexapeptide repeat family. LpxD subfamily. Homotrimer.

The enzyme catalyses a UDP-3-O-[(3R)-3-hydroxyacyl]-alpha-D-glucosamine + a (3R)-hydroxyacyl-[ACP] = a UDP-2-N,3-O-bis[(3R)-3-hydroxyacyl]-alpha-D-glucosamine + holo-[ACP] + H(+). It functions in the pathway bacterial outer membrane biogenesis; LPS lipid A biosynthesis. Catalyzes the N-acylation of UDP-3-O-acylglucosamine using 3-hydroxyacyl-ACP as the acyl donor. Is involved in the biosynthesis of lipid A, a phosphorylated glycolipid that anchors the lipopolysaccharide to the outer membrane of the cell. This is UDP-3-O-acylglucosamine N-acyltransferase from Haemophilus influenzae (strain 86-028NP).